Reading from the N-terminus, the 457-residue chain is MSTPNSDSPAAQAAKKVFSRLDLDGHNLPPSPAPSSPHNGRRYALATELVYTETKDQYGASSIPIYQSATFKQSSSNGGSEYDYTRSGNPTRTHLERHLAKIMNANRCLSVSSGMGALDVITRLLKPGDEVITGDDLYGGTNRLLTYLKNNQGVIVHHVDTTNVESVRQIISPKTTMVLLETPTNPLIKICDIPTIARITHEANEKAVVVVDNTMLSPMLFNPLDVGADIVYESGTKYLSGHHDIMAGVIAVNDTELGDKLYFTINATGCGLSPNDSFLLMRGVKTLAIRMEKQQANAQRIAEFLESHGFKVRYPGLKSHPQYDLHWSMARGAGAVLSFETGDVALSERIVEAARLWGISVSFGCVNSLISMPCRMSHASIDAKTRAERQMPEDIIRLCVGIEDADDLIDDLSRALVQAGAVTLTVDGFHANTAEGAAAAAAGSEAAETTTTAAPSL.

A disordered region spans residues 1 to 41; the sequence is MSTPNSDSPAAQAAKKVFSRLDLDGHNLPPSPAPSSPHNGR.

Belongs to the trans-sulfuration enzymes family. Pyridoxal 5'-phosphate serves as cofactor.

The protein localises to the cytoplasm. Its subcellular location is the nucleus. The enzyme catalyses L,L-cystathionine + H2O = L-homocysteine + pyruvate + NH4(+). It catalyses the reaction an S-substituted L-cysteine + H2O = a thiol + pyruvate + NH4(+). It participates in amino-acid biosynthesis; L-methionine biosynthesis via de novo pathway; L-homocysteine from L-cystathionine: step 1/1. Functionally, involved in de novo synthesis of methionine. The chain is Cystathionine beta-lyase (met-2) from Neurospora crassa (strain ATCC 24698 / 74-OR23-1A / CBS 708.71 / DSM 1257 / FGSC 987).